A 156-amino-acid polypeptide reads, in one-letter code: Small ribosomal subunit protein uS7 (156 aa).

It belongs to the universal ribosomal protein uS7 family. As to quaternary structure, part of the 30S ribosomal subunit. Contacts proteins S9 and S11.

Functionally, one of the primary rRNA binding proteins, it binds directly to 16S rRNA where it nucleates assembly of the head domain of the 30S subunit. Is located at the subunit interface close to the decoding center, probably blocks exit of the E-site tRNA. The sequence is that of Small ribosomal subunit protein uS7 from Beutenbergia cavernae (strain ATCC BAA-8 / DSM 12333 / CCUG 43141 / JCM 11478 / NBRC 16432 / NCIMB 13614 / HKI 0122).